A 131-amino-acid polypeptide reads, in one-letter code: Small ribosomal subunit protein uS8 (131 aa).

The protein belongs to the universal ribosomal protein uS8 family. Part of the 30S ribosomal subunit. Contacts proteins S5 and S12.

In terms of biological role, one of the primary rRNA binding proteins, it binds directly to 16S rRNA central domain where it helps coordinate assembly of the platform of the 30S subunit. The chain is Small ribosomal subunit protein uS8 from Ralstonia nicotianae (strain ATCC BAA-1114 / GMI1000) (Ralstonia solanacearum).